Consider the following 208-residue polypeptide: Ribosomal RNA small subunit methyltransferase G (208 aa).

S-adenosyl-L-methionine contacts are provided by residues Gly74, Leu79, 125–126 (VE), and Arg140.

Belongs to the methyltransferase superfamily. RNA methyltransferase RsmG family.

The protein resides in the cytoplasm. It catalyses the reaction guanosine(527) in 16S rRNA + S-adenosyl-L-methionine = N(7)-methylguanosine(527) in 16S rRNA + S-adenosyl-L-homocysteine. Its function is as follows. Specifically methylates the N7 position of guanine in position 527 of 16S rRNA. In Shewanella denitrificans (strain OS217 / ATCC BAA-1090 / DSM 15013), this protein is Ribosomal RNA small subunit methyltransferase G.